Reading from the N-terminus, the 344-residue chain is Geranylgeranyl pyrophosphate synthase 10, mitochondrial (344 aa).

The N-terminal 40 residues, 1 to 40 (MENREVFVYIVISIFRSLQFLFWRFRPRYNDVTSALTRPL), are a transit peptide targeting the mitochondrion. Isopentenyl diphosphate is bound by residues K91, R94, and H123. 2 residues coordinate Mg(2+): D130 and D136. R141 serves as a coordination point for dimethylallyl diphosphate. Residue R142 coordinates isopentenyl diphosphate. Residues K229, T230, Q267, K284, and K294 each coordinate dimethylallyl diphosphate.

This sequence belongs to the FPP/GGPP synthase family. As to quaternary structure, monomer. The cofactor is Mg(2+).

It localises to the mitochondrion. It catalyses the reaction isopentenyl diphosphate + dimethylallyl diphosphate = (2E)-geranyl diphosphate + diphosphate. The enzyme catalyses isopentenyl diphosphate + (2E)-geranyl diphosphate = (2E,6E)-farnesyl diphosphate + diphosphate. The catalysed reaction is isopentenyl diphosphate + (2E,6E)-farnesyl diphosphate = (2E,6E,10E)-geranylgeranyl diphosphate + diphosphate. It participates in isoprenoid biosynthesis; farnesyl diphosphate biosynthesis; farnesyl diphosphate from geranyl diphosphate and isopentenyl diphosphate: step 1/1. The protein operates within isoprenoid biosynthesis; geranyl diphosphate biosynthesis; geranyl diphosphate from dimethylallyl diphosphate and isopentenyl diphosphate: step 1/1. It functions in the pathway isoprenoid biosynthesis; geranylgeranyl diphosphate biosynthesis; geranylgeranyl diphosphate from farnesyl diphosphate and isopentenyl diphosphate: step 1/1. Catalyzes the trans-addition of the three molecules of IPP onto DMAPP to form geranylgeranyl pyrophosphate. The polypeptide is Geranylgeranyl pyrophosphate synthase 10, mitochondrial (Arabidopsis thaliana (Mouse-ear cress)).